The sequence spans 767 residues: Actin filament-associated protein 1-like 1 (767 aa).

Residues 83–97 (LRDMSDDGERSKEAS) are compositionally biased toward basic and acidic residues. The tract at residues 83 to 145 (LRDMSDDGER…KSPEYISSHN (63 aa)) is disordered. A phosphoserine mark is found at S87, S93, S97, S103, and S152. Residues 164–173 (SYPTTRMNGE) show a composition bias toward polar residues. The interval 164–210 (SYPTTRMNGESKSSYNDSDAMSSSYESYDEEEEEEKGRQPKHQWPSE) is disordered. Low complexity predominate over residues 174 to 189 (SKSSYNDSDAMSSSYE). Residues 219 to 315 (DCRICAFLLR…WLKVIREVSR (97 aa)) form the PH 1 domain. S328 and S342 each carry phosphoserine. Positions 341-381 (LSQEKQNSDSDSLGMNDSSSTLSRREACEHGKGKKNSLAEL) are disordered. The segment covering 349–362 (DSDSLGMNDSSSTL) has biased composition (polar residues). Positions 417-511 (EAPCCGYLNV…WLGLLLVEMG (95 aa)) constitute a PH 2 domain. Phosphotyrosine is present on Y556. A disordered region spans residues 563–605 (KVQDEEPQRPTGAQVKRHASSCSEKSHRADPQVKVKRHASSAN). Residues 586-595 (EKSHRADPQV) show a composition bias toward basic and acidic residues. Positions 610-700 (GKNRAEEDAR…AVKERLQQSL (91 aa)) form a coiled coil. The tract at residues 704-767 (PALGLSVSSK…KAKEWEMKKT (64 aa)) is disordered. Residues 709–733 (SVSSKSKSQETTNKPQSSVPEQSLP) are compositionally biased toward polar residues. The residue at position 746 (S746) is a Phosphoserine. The segment covering 758–767 (KAKEWEMKKT) has biased composition (basic and acidic residues).

Interacts with CTTN.

Its subcellular location is the cytoplasm. It localises to the cell projection. The protein resides in the podosome. The protein localises to the invadopodium. In terms of biological role, may be involved in podosome and invadosome formation. The chain is Actin filament-associated protein 1-like 1 (Afap1l1) from Rattus norvegicus (Rat).